The sequence spans 388 residues: MNLHEYQGKQLFAEYGLPVSKGFAVDTPEEAAEACDKIGGSEWVVKAQVHAGGRGKAGGVKLVKSKEDAKAFAQQWLGKNLVTYQTDANGQPVSKILVESCTDIDKELYLGAVVDRSSRRIVFMASTEGGVDIEKVAHDTPEKILKATIDPLVGAQPYQGRELAFQLGLKGDQIKQFTHIFVGLAKLFQDYDLALLEVNPLVIKKDGNLHCLDAKINIDSNALYRQPKLRAMHDPSQDDAREAHAQKWELNYVALEGNIGCMVNGAGLAMGTMDIVNLHGGKPANFLDVGGGATKERVTEAFKIILSDSNVKAVLVNIFGGIVRCDMIAEGIIGAVKEVGVKVPVVVRLEGNNAELGAKVLAESGLNIIAATSLTDAAQQVVKAAEGK.

The 236-residue stretch at 9-244 (KQLFAEYGLP…PSQDDAREAH (236 aa)) folds into the ATP-grasp domain. Residues Lys46, 53–55 (GRG), Glu99, Thr102, and Glu107 each bind ATP. Asn199 and Asp213 together coordinate Mg(2+). Residues Asn264 and 321–323 (GIV) contribute to the substrate site.

It belongs to the succinate/malate CoA ligase beta subunit family. In terms of assembly, heterotetramer of two alpha and two beta subunits. Requires Mg(2+) as cofactor.

It catalyses the reaction succinate + ATP + CoA = succinyl-CoA + ADP + phosphate. The catalysed reaction is GTP + succinate + CoA = succinyl-CoA + GDP + phosphate. It participates in carbohydrate metabolism; tricarboxylic acid cycle; succinate from succinyl-CoA (ligase route): step 1/1. Functionally, succinyl-CoA synthetase functions in the citric acid cycle (TCA), coupling the hydrolysis of succinyl-CoA to the synthesis of either ATP or GTP and thus represents the only step of substrate-level phosphorylation in the TCA. The beta subunit provides nucleotide specificity of the enzyme and binds the substrate succinate, while the binding sites for coenzyme A and phosphate are found in the alpha subunit. The sequence is that of Succinate--CoA ligase [ADP-forming] subunit beta from Pseudomonas aeruginosa (strain LESB58).